The following is a 487-amino-acid chain: Cytochrome P450 2C5 (487 aa).

Position 432 (Cys-432) interacts with heme.

It belongs to the cytochrome P450 family. Requires heme as cofactor.

It is found in the endoplasmic reticulum membrane. The protein localises to the microsome membrane. The catalysed reaction is an organic molecule + reduced [NADPH--hemoprotein reductase] + O2 = an alcohol + oxidized [NADPH--hemoprotein reductase] + H2O + H(+). Its function is as follows. Cytochromes P450 are a group of heme-thiolate monooxygenases. In liver microsomes, this enzyme is involved in an NADPH-dependent electron transport pathway. It oxidizes a variety of structurally unrelated compounds, including steroids, fatty acids, and xenobiotics. This is Cytochrome P450 2C5 (CYP2C5) from Oryctolagus cuniculus (Rabbit).